Consider the following 716-residue polypeptide: Translation initiation factor IF-2 (716 aa).

Positions 50–137 (FKKSAKPAGN…KPKKELPEKI (88 aa)) are disordered. Over residues 92–101 (NNVQNTQFNN) the composition is skewed to low complexity. Residues 102 to 118 (KNKKKNNNNKKNKRGKN) show a composition bias toward basic residues. Residues 125 to 137 (KQFKPKKELPEKI) are compositionally biased toward basic and acidic residues. Residues 217–386 (IRPPVVTIMG…LLVSEVEELK (170 aa)) form the tr-type G domain. Positions 226-233 (GHVDHGKT) are G1. 226–233 (GHVDHGKT) is a GTP binding site. The segment at 251 to 255 (GITQH) is G2. The G3 stretch occupies residues 272–275 (DTPG). Residues 272-276 (DTPGH) and 326-329 (NKID) each bind GTP. The G4 stretch occupies residues 326–329 (NKID). The tract at residues 362 to 364 (SAL) is G5.

It belongs to the TRAFAC class translation factor GTPase superfamily. Classic translation factor GTPase family. IF-2 subfamily.

The protein resides in the cytoplasm. One of the essential components for the initiation of protein synthesis. Protects formylmethionyl-tRNA from spontaneous hydrolysis and promotes its binding to the 30S ribosomal subunits. Also involved in the hydrolysis of GTP during the formation of the 70S ribosomal complex. This Bacillus licheniformis (strain ATCC 14580 / DSM 13 / JCM 2505 / CCUG 7422 / NBRC 12200 / NCIMB 9375 / NCTC 10341 / NRRL NRS-1264 / Gibson 46) protein is Translation initiation factor IF-2.